The primary structure comprises 590 residues: Sperm-associated microtubule inner protein 4 (590 aa).

At Thr219 the chain carries Phosphothreonine. Residues Ser407 and Ser422 each carry the phosphoserine modification. Lys427 participates in a covalent cross-link: Glycyl lysine isopeptide (Lys-Gly) (interchain with G-Cter in SUMO2). Position 442 is a phosphotyrosine (Tyr442). Ser485 is modified (phosphoserine). Residue Lys545 forms a Glycyl lysine isopeptide (Lys-Gly) (interchain with G-Cter in SUMO2) linkage. At Ser547 the chain carries Phosphoserine.

As to expression, predominantly expressed in the testes.

It localises to the cytoplasm. The protein resides in the cytoskeleton. The protein localises to the microtubule organizing center. Its subcellular location is the centrosome. It is found in the flagellum axoneme. In terms of biological role, microtubule inner protein (MIP) part of the dynein-decorated doublet microtubules (DMTs) in flagellum axoneme. May serve to reinforce and thus stabilize the microtubule structure in the sperm flagella. The polypeptide is Sperm-associated microtubule inner protein 4 (Homo sapiens (Human)).